The chain runs to 156 residues: 6,7-dimethyl-8-ribityllumazine synthase (156 aa).

5-amino-6-(D-ribitylamino)uracil contacts are provided by residues phenylalanine 22, alanine 57–glutamate 59, and threonine 81–isoleucine 83. Position 86–87 (glycine 86–threonine 87) interacts with (2S)-2-hydroxy-3-oxobutyl phosphate. The active-site Proton donor is the histidine 89. Residue phenylalanine 114 coordinates 5-amino-6-(D-ribitylamino)uracil. Arginine 128 provides a ligand contact to (2S)-2-hydroxy-3-oxobutyl phosphate.

This sequence belongs to the DMRL synthase family. As to quaternary structure, forms an icosahedral capsid composed of 60 subunits, arranged as a dodecamer of pentamers.

It catalyses the reaction (2S)-2-hydroxy-3-oxobutyl phosphate + 5-amino-6-(D-ribitylamino)uracil = 6,7-dimethyl-8-(1-D-ribityl)lumazine + phosphate + 2 H2O + H(+). It functions in the pathway cofactor biosynthesis; riboflavin biosynthesis; riboflavin from 2-hydroxy-3-oxobutyl phosphate and 5-amino-6-(D-ribitylamino)uracil: step 1/2. Functionally, catalyzes the formation of 6,7-dimethyl-8-ribityllumazine by condensation of 5-amino-6-(D-ribitylamino)uracil with 3,4-dihydroxy-2-butanone 4-phosphate. This is the penultimate step in the biosynthesis of riboflavin. The chain is 6,7-dimethyl-8-ribityllumazine synthase from Yersinia pseudotuberculosis serotype O:1b (strain IP 31758).